The chain runs to 161 residues: Ribosome maturation factor RimP (161 aa).

Belongs to the RimP family.

The protein resides in the cytoplasm. Functionally, required for maturation of 30S ribosomal subunits. The sequence is that of Ribosome maturation factor RimP from Rickettsia conorii (strain ATCC VR-613 / Malish 7).